A 188-amino-acid polypeptide reads, in one-letter code: Elongation factor P (188 aa).

Lysine 34 bears the N6-(3,6-diaminohexanoyl)-5-hydroxylysine mark.

The protein belongs to the elongation factor P family. In terms of processing, may be beta-lysylated on the epsilon-amino group of Lys-34 by the combined action of EpmA and EpmB, and then hydroxylated on the C5 position of the same residue by EpmC (if this protein is present). Lysylation is critical for the stimulatory effect of EF-P on peptide-bond formation. The lysylation moiety may extend toward the peptidyltransferase center and stabilize the terminal 3-CCA end of the tRNA. Hydroxylation of the C5 position on Lys-34 may allow additional potential stabilizing hydrogen-bond interactions with the P-tRNA.

The protein localises to the cytoplasm. It functions in the pathway protein biosynthesis; polypeptide chain elongation. Functionally, involved in peptide bond synthesis. Alleviates ribosome stalling that occurs when 3 or more consecutive Pro residues or the sequence PPG is present in a protein, possibly by augmenting the peptidyl transferase activity of the ribosome. Modification of Lys-34 is required for alleviation. The sequence is that of Elongation factor P from Actinobacillus pleuropneumoniae serotype 5b (strain L20).